Reading from the N-terminus, the 479-residue chain is Flotillin-like protein 3 (479 aa).

Cysteine 36 carries S-palmitoyl cysteine lipidation. 2 coiled-coil regions span residues 227–251 and 306–326; these read KVKT…AALA and EYET…KQAE.

It belongs to the band 7/mec-2 family. Flotillin subfamily. Post-translationally, may be palmitoylated.

It localises to the cell membrane. The protein localises to the membrane. The protein resides in the caveola. In terms of biological role, may act as a scaffolding protein within caveolar membranes, functionally participating in formation of caveolae or caveolae-like vesicles. This Arabidopsis thaliana (Mouse-ear cress) protein is Flotillin-like protein 3 (FLOT3).